We begin with the raw amino-acid sequence, 380 residues long: Histidinol-phosphate aminotransferase 1 (380 aa).

An N6-(pyridoxal phosphate)lysine modification is found at Lys-235.

It belongs to the class-II pyridoxal-phosphate-dependent aminotransferase family. Histidinol-phosphate aminotransferase subfamily. As to quaternary structure, homodimer. The cofactor is pyridoxal 5'-phosphate.

The enzyme catalyses L-histidinol phosphate + 2-oxoglutarate = 3-(imidazol-4-yl)-2-oxopropyl phosphate + L-glutamate. It functions in the pathway amino-acid biosynthesis; L-histidine biosynthesis; L-histidine from 5-phospho-alpha-D-ribose 1-diphosphate: step 7/9. In Psychrobacter arcticus (strain DSM 17307 / VKM B-2377 / 273-4), this protein is Histidinol-phosphate aminotransferase 1.